A 366-amino-acid polypeptide reads, in one-letter code: D-alanine--D-alanine ligase A (366 aa).

In terms of domain architecture, ATP-grasp spans 145 to 348 (KRLLRDAGLK…YRELITALIE (204 aa)). 175–230 (VEQLGLPLFVKPANQGSSVGVSKVKREADLRAALDEAFRYDHKVLVEQAVIGREIE) provides a ligand contact to ATP. Mg(2+) contacts are provided by Asp-302, Glu-315, and Asn-317.

This sequence belongs to the D-alanine--D-alanine ligase family. Requires Mg(2+) as cofactor. It depends on Mn(2+) as a cofactor.

The protein localises to the cytoplasm. It catalyses the reaction 2 D-alanine + ATP = D-alanyl-D-alanine + ADP + phosphate + H(+). Its pathway is cell wall biogenesis; peptidoglycan biosynthesis. Its function is as follows. Cell wall formation. In Chromobacterium violaceum (strain ATCC 12472 / DSM 30191 / JCM 1249 / CCUG 213 / NBRC 12614 / NCIMB 9131 / NCTC 9757 / MK), this protein is D-alanine--D-alanine ligase A.